Here is an 87-residue protein sequence, read N- to C-terminus: Lantipeptide prochlorosin 3.3 (87 aa).

Positions 1–64 (MSEEQLKAFI…DEELEAASGG (64 aa)) are excised as a propeptide. T67 is subject to 2,3-didehydrobutyrine. Residues 75–85 (TAGCYGGTKMC) constitute a cross-link (beta-methyllanthionine (Thr-Cys)). Positions 78 to 82 (CYGGT) form a cross-link, beta-methyllanthionine (Cys-Thr).

Cross-links are proved in vitro, when coepressed in E.coli with the ProcM lanthionine synthetase. Post-translationally, the beta-methyllanthionine residues have a DL configuration (with 2S,3S,6R stereochemistry). In terms of processing, maturation of prochlorosin involves the enzymatic conversion of Thr, and Ser into dehydrated AA and the formation of thioether bonds with cysteines. This is followed by membrane translocation and cleavage of the modified precursor.

The protein resides in the secreted. Lanthionine-containing peptide (lantipeptide) with unknown function. Does not show antibiotic activity against Lactococcus lactis 117 and Bacillus subtilis 6633 bacteria. Organisms that produce this peptide live in oligotrophic environments at very dilute concentrations, suggesting this peptide is not secreted to influence other bacteria. This Prochlorococcus marinus (strain MIT 9313) protein is Lantipeptide prochlorosin 3.3.